A 110-amino-acid polypeptide reads, in one-letter code: UPF0122 protein gbs1018 (110 aa).

The protein belongs to the UPF0122 family.

In terms of biological role, might take part in the signal recognition particle (SRP) pathway. This is inferred from the conservation of its genetic proximity to ftsY/ffh. May be a regulatory protein. The protein is UPF0122 protein gbs1018 of Streptococcus agalactiae serotype III (strain NEM316).